The sequence spans 122 residues: Large ribosomal subunit protein uL14 (122 aa).

The protein belongs to the universal ribosomal protein uL14 family. As to quaternary structure, part of the 50S ribosomal subunit. Forms a cluster with proteins L3 and L19. In the 70S ribosome, L14 and L19 interact and together make contacts with the 16S rRNA in bridges B5 and B8.

In terms of biological role, binds to 23S rRNA. Forms part of two intersubunit bridges in the 70S ribosome. The sequence is that of Large ribosomal subunit protein uL14 from Pseudomonas fluorescens (strain ATCC BAA-477 / NRRL B-23932 / Pf-5).